The primary structure comprises 562 residues: MFS-type transporter calB (562 aa).

Positions 1–16 (MDEVTRTAQRSPSITE) are enriched in polar residues. A disordered region spans residues 1–45 (MDEVTRTAQRSPSITETHAGETKLAGPGEKEGDVESPVDPSADSE). A helical membrane pass occupies residues 57–77 (FAILASVTLSAFLMLLDGSII). An N-linked (GlcNAc...) asparagine glycan is attached at Asn-83. The next 13 helical transmembrane spans lie at 94 to 113 (IGWY…PLSG), 123 to 143 (WTYL…GVAN), 154 to 174 (VAGL…AGAV), 184 to 204 (GIYL…GGAL), 213 to 233 (CFYI…FLQV), 256 to 276 (LIGF…LYYG), 284 to 304 (SSQV…FALW), 329 to 349 (INGA…PIYF), 362 to 382 (VNTL…GVLV), 389 to 409 (LPFA…VTLF), 418 to 438 (WIGY…MGII), 451 to 471 (VGIA…VVVG), and 530 to 550 (VFYL…GMGW). Asn-557 is a glycosylation site (N-linked (GlcNAc...) asparagine).

The protein belongs to the major facilitator superfamily. TCR/Tet family.

The protein resides in the cell membrane. Its function is as follows. MFS-type transporter; part of the gene cluster that mediates the biosynthesis of calbistrin A and related compounds. Calbistrin A is a secondary metabolite with an interesting structure that was recently found to have bioactivity against leukemia cells. It consists of two polyketides linked by an ester bond: a bicyclic decalin containing polyketide and a linear 12 carbon dioic acid structure. Required for the secretion of calbistrin A and calbistrin C, as well as of related compounds decumbenone A, B and C. This is MFS-type transporter calB from Penicillium decumbens.